The sequence spans 121 residues: MSIEVVSKAVHKNARISPLKASQVLRLLRGKPVEYAMYQLSFMNKKAAVIIKNVLKSAVANAEQKGIDPTKLVILEAKADKGIMFRKWMPRAHGRATMMRKNTSHITIALGELQEATEEAK.

It belongs to the universal ribosomal protein uL22 family. In terms of assembly, part of the 50S ribosomal subunit.

Functionally, this protein binds specifically to 23S rRNA; its binding is stimulated by other ribosomal proteins, e.g. L4, L17, and L20. It is important during the early stages of 50S assembly. It makes multiple contacts with different domains of the 23S rRNA in the assembled 50S subunit and ribosome. In terms of biological role, the globular domain of the protein is located near the polypeptide exit tunnel on the outside of the subunit, while an extended beta-hairpin is found that lines the wall of the exit tunnel in the center of the 70S ribosome. The protein is Large ribosomal subunit protein uL22 of Hydrogenobaculum sp. (strain Y04AAS1).